We begin with the raw amino-acid sequence, 239 residues long: MDVEKDVLDVYIKNLENQIGNKRYFLKQAQGAIDEITKRSLDTEGKPVNSEVFTELLRKPMFFSERADPIGFSLTSNFLSLRAQSSSEWLSLMNDQSVDQKAMLLLQNNINSDLKELLRKLQHQMTIMDSKKQDHAHIRTRKARNKELWDSLADFLKGYLVPNLDDNDESIDSLTNEVMLLMKRLIEHDLNLTLNDFSSKTIPIYRLLLRANIITVIEGSTNPGTKYIKLIDFNETSLT.

It belongs to the CENP-K/MCM22 family. Component of the heterotrimeric kinetochore subcomplex CTF3, which consists of CTF3, MCM16 and MCM22. The CTF3 subcomplex is part of a larger constitutive centromere-associated network (CCAN) (also known as central kinetochore CTF19 complex in yeast), which is composed of at least AME1, CHL4, CNN1, CTF3, CTF19, IML3, MCM16, MCM21, MCM22, MHF1, MHF2, MIF2, NKP1, NKP2, OKP1 and WIP1. Interacts with CTF19.

It localises to the nucleus. Its subcellular location is the chromosome. The protein resides in the centromere. The protein localises to the kinetochore. Component of the kinetochore, a multiprotein complex that assembles on centromeric DNA and attaches chromosomes to spindle microtubules, mediating chromosome segregation and sister chromatid segregation during meiosis and mitosis. Component of the inner kinetochore constitutive centromere-associated network (CCAN), which serves as a structural platform for outer kinetochore assembly. The protein is Inner kinetochore subunit MCM22 (MCM22) of Saccharomyces cerevisiae (strain ATCC 204508 / S288c) (Baker's yeast).